The sequence spans 118 residues: Peptidyl-tRNA hydrolase (118 aa).

The protein belongs to the PTH2 family.

The protein resides in the cytoplasm. The enzyme catalyses an N-acyl-L-alpha-aminoacyl-tRNA + H2O = an N-acyl-L-amino acid + a tRNA + H(+). The natural substrate for this enzyme may be peptidyl-tRNAs which drop off the ribosome during protein synthesis. The chain is Peptidyl-tRNA hydrolase from Thermococcus onnurineus (strain NA1).